The sequence spans 479 residues: MSSTNGSEGDHRLLIVSNRLPITIRRSEGGKYEFSMSSGGLVTGLSGLSKTTTFQWYGWPGLEVPEDELGSVKKRLKDEFNATPVFMDDKLADRHYNGFSNSILWPLLHYHPGEIVFDEGAWDAYREANLLFAKTIVKEAQDGDLIWVQDYHLMLLPELLRAELRAAGKKANKIGFFLHTPFPSSEIYRILPVRGQLLRGVLHCDLIGFHTYDYARHFLSSCSHLLGLVTTPSSVKYEGRSVAVGAFPIGIDPDKFTDGLKSPKVQNRIASLENKFQGTKLMVSVDRLDYIKGIPQKLHALEVFLQNHPEWVGKVVLVQVAVPSRQDVEEYQNLRAVVNELVGRINGKFGTVDYMPIHFMHKSVSFDELIALYAASDACVVSSTRDGMNLVSFEYIATQQKRKGVLILSEFAGAAQSLNGSLVVNPWNTEELARAYHEAVSMSDEQRARKFEKLYKYISKYTSAFWGKSFVAELLQCSS.

2 residues coordinate D-glucose 6-phosphate: Y96 and D150. UDP is bound by residues R287 and K292. Positions 287 and 292 each coordinate UDP-alpha-D-glucose. Position 325 (R325) interacts with D-glucose 6-phosphate. UDP is bound by residues 363–364 (SV) and 390–394 (LVSFE). Position 386–394 (386–394 (DGMNLVSFE)) interacts with UDP-alpha-D-glucose.

This sequence belongs to the glycosyltransferase 20 family.

The catalysed reaction is D-glucose 6-phosphate + UDP-alpha-D-glucose = alpha,alpha-trehalose 6-phosphate + UDP + H(+). It functions in the pathway carbohydrate biosynthesis. Its function is as follows. Synthase catalytic subunit of the trehalose synthase complex that catalyzes the production of trehalose from glucose-6-phosphate and UDP-alpha-D-glucose in a two step process. The disaccharide trehalose serves as a storage carbohydrate that is mobilized during conidial germination. Regulates the level of trehalose as a protectant for cell integrity during thermal and oxidative stress. The chain is Alpha,alpha-trehalose-phosphate synthase [UDP-forming] 2 from Aspergillus fumigatus (strain ATCC MYA-4609 / CBS 101355 / FGSC A1100 / Af293) (Neosartorya fumigata).